A 158-amino-acid chain; its full sequence is Transcriptional repressor NrdR (158 aa).

A zinc finger spans residues 3-34 (CPYCGYPDSKVIDSRPTDDNTSIRRRRECLKC). The ATP-cone domain occupies 49–139 (ILVIKKDNRR…VYRQFKDINT (91 aa)).

The protein belongs to the NrdR family. It depends on Zn(2+) as a cofactor.

In terms of biological role, negatively regulates transcription of bacterial ribonucleotide reductase nrd genes and operons by binding to NrdR-boxes. This Thermoanaerobacter pseudethanolicus (strain ATCC 33223 / 39E) (Clostridium thermohydrosulfuricum) protein is Transcriptional repressor NrdR.